The following is a 296-amino-acid chain: Putative peptide transport system permease protein BruAb2_1032 (296 aa).

Helical transmembrane passes span 35-55 (IGLVLLLIVVLAAVLAPWITN), 97-117 (LWIGLTVAVLSAILGAIIGIA), 131-151 (VMDALMAFPAILLAIGISAAL), 205-225 (ILPNCLAPLLVTLTFVFAYAI), 229-249 (ATLSFLGIGTPPPHASWGSIV), and 260-280 (WWIMLFPGIAITISALAINLI). The ABC transmembrane type-1 domain occupies 97-281 (LWIGLTVAVL…ISALAINLIG (185 aa)).

It belongs to the binding-protein-dependent transport system permease family. In terms of assembly, the complex is composed of two ATP-binding proteins (BruAb2_1033 and BruAb2_1034), two transmembrane proteins (BruAb2_1031 and BruAb2_1032) and a solute-binding protein (BruAb2_1030).

It is found in the cell inner membrane. In terms of biological role, probably part of an ABC transporter complex that could be involved in peptide import. Probably responsible for the translocation of the substrate across the membrane. This chain is Putative peptide transport system permease protein BruAb2_1032, found in Brucella abortus biovar 1 (strain 9-941).